We begin with the raw amino-acid sequence, 228 residues long: Serum amyloid P-component (228 aa).

The N-terminal stretch at Met1–Ala20 is a signal peptide. In terms of domain architecture, Pentraxin (PTX) spans Asn25 to Asp224. A glycan (N-linked (GlcNAc...) asparagine) is linked at Asn52. Residues Cys56 and Cys115 are joined by a disulfide bond. The Ca(2+) site is built by Asp78, Asn79, Glu156, Gln157, Asp158, and Gln168.

This sequence belongs to the pentraxin family. As to quaternary structure, homopentamer. Pentraxin (or pentaxin) have a discoid arrangement of 5 non-covalently bound subunits. Ca(2+) is required as a cofactor.

It localises to the secreted. This is Serum amyloid P-component (Apcs) from Rattus norvegicus (Rat).